We begin with the raw amino-acid sequence, 114 residues long: Lymphotactin (114 aa).

An N-terminal signal peptide occupies residues 1 to 21 (MRLLLLTFLGVCCFAAWVVEG). Cysteines 32 and 69 form a disulfide. The disordered stretch occupies residues 87–114 (RASASKSKAETIPTQAQRSASTAVTLTG). Over residues 98 to 114 (IPTQAQRSASTAVTLTG) the composition is skewed to polar residues.

It belongs to the intercrine gamma family.

The protein resides in the secreted. Functionally, chemotactic activity for lymphocytes but not for monocytes or neutrophils. In thymus, mediates medullary accumulation of thymic dendritic cells and contributes to regulatoy T cell development, playing a role in self-tolerance establishment. The polypeptide is Lymphotactin (Xcl1) (Rattus norvegicus (Rat)).